Reading from the N-terminus, the 415-residue chain is uncharacterized protein (415 aa).

Disordered regions lie at residues 39–77, 220–247, and 346–415; these read FLPP…RPIH, AEDK…HPLT, and VTLN…NGSK. 3 stretches are compositionally biased toward basic and acidic residues: residues 220-238, 365-380, and 400-415; these read AEDK…ESKN, DVNK…DKHM, and SKTE…NGSK.

This is an uncharacterized protein from Rattus norvegicus (Rat).